An 859-amino-acid polypeptide reads, in one-letter code: Protein O-mannosyl-transferase Tmtc1 (859 aa).

The Cytoplasmic segment spans residues 1-22; sequence MHTPKCRRPSMSATLSHKDLAG. A helical membrane pass occupies residues 23–43; that stretch reads LAGCSALAFVLYLNTLNAGFV. Residues 44 to 103 are Extracellular-facing; it reads YDDRRAILANGDVTGARPLANLLRNDFWGTPLVDSGSHGSWRPLCVLSFRLNYLAGGMTP. A helical membrane pass occupies residues 104 to 124; sequence LGYHLVNVMLHCVATWLVFLV. Residues 125 to 134 are Cytoplasmic-facing; sequence ARTLLPSRMG. A run of 2 helical transmembrane segments spans residues 135-154 and 155-174; these read VLAA…AVAG and LVGR…YLSY. Residues 175–189 are Cytoplasmic-facing; it reads RRHMLNREWGSLILT. A helical membrane pass occupies residues 190 to 210; it reads IMLALAALLCKETAITALLLC. Topologically, residues 211-245 are extracellular; it reads GLCDVLSPVGRENSDKVCDGSISGLASFNFQRRFR. Residues 246–266 traverse the membrane as a helical segment; it reads SLSILGFTLLCGLYCRLSLLP. At 267–288 the chain is on the cytoplasmic side; the sequence is RPSTAFSAADNPTAHESCFWTR. A helical transmembrane segment spans residues 289–309; it reads TLTFLYLPVANFGILLWPQEL. Over 310 to 328 the chain is Extracellular; that stretch reads SFDWGMEAVSRIRTLWDAR. The helical transmembrane segment at 329 to 349 threads the bilayer; sequence NILTAGFYGSLVAILWKGSGL. The Cytoplasmic portion of the chain corresponds to 350-422; that stretch reads RSAASPMDFA…SWTAAPILGT (73 aa). A helical membrane pass occupies residues 423 to 443; that stretch reads AFLVLPFLPASNLLFYVGFVM. The Extracellular portion of the chain corresponds to 444–446; sequence AER. The helical transmembrane segment at 447–467 threads the bilayer; sequence VLYLPSVGYCLLFGLGFGHLW. The Cytoplasmic segment spans residues 468 to 473; it reads QRVNSS. A helical membrane pass occupies residues 474-493; that stretch reads WRSRLMLLCGLALLLGVHGV. The Extracellular portion of the chain corresponds to 494 to 859; sequence RTFRRNLDWR…RMNVHKHENE (366 aa). TPR repeat units follow at residues 518-551, 552-585, 586-620, 632-665, 671-704, 705-739, 740-773, 774-807, and 808-841; these read PKAL…RPTM, ADAH…RPQL, AVAY…EGSG, YTCY…LPLL, AVLH…QPEQ, GAAY…APLE, PSSH…APQD, YTLQ…QPMA, and AHAH…QPGH. An N-linked (GlcNAc...) asparagine glycan is attached at N567. N718 carries an N-linked (GlcNAc...) asparagine glycan.

Belongs to the TMTC family.

The protein resides in the membrane. The protein localises to the endoplasmic reticulum. It carries out the reaction a di-trans,poly-cis-dolichyl beta-D-mannosyl phosphate + L-seryl-[protein] = 3-O-(alpha-D-mannosyl)-L-seryl-[protein] + a di-trans,poly-cis-dolichyl phosphate + H(+). It catalyses the reaction a di-trans,poly-cis-dolichyl beta-D-mannosyl phosphate + L-threonyl-[protein] = 3-O-(alpha-D-mannosyl)-L-threonyl-[protein] + a di-trans,poly-cis-dolichyl phosphate + H(+). It functions in the pathway protein modification; protein glycosylation. Transfers mannosyl residues to the hydroxyl group of serine or threonine residues. This chain is Protein O-mannosyl-transferase Tmtc1, found in Drosophila melanogaster (Fruit fly).